A 149-amino-acid chain; its full sequence is Protegrin-1 (149 aa).

An N-terminal signal peptide occupies residues 1–29; the sequence is METQRASLCLGRWSLWLLLLALVVPSASA. Residues 30–130 constitute a propeptide that is removed on maturation; it reads QALSYREAVL…DITCNEVQGV (101 aa). A disordered region spans residues 61–80; it reads DQPPKADEDPGTPKPVSFTV. Cystine bridges form between Cys85–Cys96, Cys107–Cys124, Cys136–Cys145, and Cys138–Cys143. Position 148 is an arginine amide (Arg148).

This sequence belongs to the cathelicidin family.

It is found in the secreted. Microbicidal activity. Active against E.coli, Listeria monocytogenes and C.albicans, in vitro. This is Protegrin-1 (NPG1) from Sus scrofa (Pig).